The primary structure comprises 113 residues: Large ribosomal subunit protein bL17 (113 aa).

It belongs to the bacterial ribosomal protein bL17 family. In terms of assembly, part of the 50S ribosomal subunit. Contacts protein L32.

The protein is Large ribosomal subunit protein bL17 of Syntrophomonas wolfei subsp. wolfei (strain DSM 2245B / Goettingen).